The chain runs to 335 residues: Glycerol-3-phosphate dehydrogenase [NAD(P)+] (335 aa).

The NADPH site is built by Ser-15, Tyr-16, His-36, and Lys-110. Lys-110, Gly-139, and Thr-141 together coordinate sn-glycerol 3-phosphate. Ala-143 serves as a coordination point for NADPH. Positions 195, 248, 258, 259, and 260 each coordinate sn-glycerol 3-phosphate. The active-site Proton acceptor is the Lys-195. An NADPH-binding site is contributed by Arg-259. NADPH is bound by residues Val-283 and Glu-285.

It belongs to the NAD-dependent glycerol-3-phosphate dehydrogenase family.

The protein resides in the cytoplasm. It catalyses the reaction sn-glycerol 3-phosphate + NAD(+) = dihydroxyacetone phosphate + NADH + H(+). The enzyme catalyses sn-glycerol 3-phosphate + NADP(+) = dihydroxyacetone phosphate + NADPH + H(+). It participates in membrane lipid metabolism; glycerophospholipid metabolism. Catalyzes the reduction of the glycolytic intermediate dihydroxyacetone phosphate (DHAP) to sn-glycerol 3-phosphate (G3P), the key precursor for phospholipid synthesis. The chain is Glycerol-3-phosphate dehydrogenase [NAD(P)+] from Haemophilus influenzae (strain ATCC 51907 / DSM 11121 / KW20 / Rd).